The following is a 597-amino-acid chain: uncharacterized protein (597 aa).

5 helical membrane passes run Val37–Val57, Ile67–Ala87, Gly109–Ile129, Ser134–Trp154, and Ala162–Val182. The Histidine kinase domain maps to His393 to Ser597.

It is found in the cell membrane. This is an uncharacterized protein from Chloroflexus aurantiacus (strain ATCC 29366 / DSM 635 / J-10-fl).